A 443-amino-acid polypeptide reads, in one-letter code: Zinc finger protein ZIC 1 (443 aa).

A C2H2-type 1; atypical zinc finger spans residues 221–256 (LICKWIEPEQLANPKKSCNKTFSTMHELVTHVTVEH). The C2H2-type 2; atypical zinc finger occupies 265 to 292 (HICVWEECPREGKPFKAKYKLINHIRVH). 3 consecutive C2H2-type zinc fingers follow at residues 298–322 (FPCP…KRTH), 328–352 (FKCE…MHVH), and 358–380 (YLCK…MKVH). Residues 371 to 433 (SSLRKHMKVH…AVHHTSNHST (63 aa)) form a disordered region. Low complexity predominate over residues 383 to 396 (SSQGSQPSPAASSG). Positions 397–413 (YESSTPPTIVSPSAENQ) are enriched in polar residues. The interval 408-443 (PSAENQSTSSLSPSSSAVHHTSNHSTLSSNFNEWYV) is negatively regulates transcriptional activity. Residues 414–433 (STSSLSPSSSAVHHTSNHST) are compositionally biased toward low complexity.

Belongs to the GLI C2H2-type zinc-finger protein family. In terms of tissue distribution, during early gastrula stages, widely expressed in the dorsal ectoderm. At mid-gastrula, expressed throughout the presumptive neural plate and at late gastrula, expression gradually diminishes in the dorsal midline and increases in the anterior folds. By early neurula stage, expression becomes restricted to the lateral edges of the neural plate, corresponding to the presumptive dorsal neural plate and neural crest, and in flanking ectoderm. In early tailbud stages (stages 22-23), expressed in the dorsal forebrain, midbrain and hindbrain. Subsequently expressed in the telencephalon and at the diencephalon/mesencephalon boundary. In the spinal cord, expression is restricted to the dorsal most region including the roof plate. Also expressed in the somites but not in eye vesicles. At larval stages, expressed mainly in the dorsal neural tube throughout its anteroposterior axis.

It is found in the nucleus. The protein localises to the cytoplasm. Transcriptional activator that induces expression of multiple genes including pax3, en2, snai2/slug, feb and a subset of wnt genes. Has multiple key roles in the regulation of neural induction and neurogenesis: acts as a neural competence factor, sensitizing the presumptive neuroectoderm to respond to subsequent neuralizing signals. Promotes both preplacodal cell fates and neural crest cell fates, two of the cell populations that arise from the neural plate border. Cooperates with pax3 in concert with wnt signaling to determine neural crest fate. Synergizes with the bmp-inhibitor noggin/nog and acts through the wnt pathway to induce expression of en2. May bind to the minimal GLI-consensus sequence 5'-TGGGTGGTC-3'. The polypeptide is Zinc finger protein ZIC 1 (zic1) (Xenopus laevis (African clawed frog)).